The chain runs to 146 residues: Probable gamma-secretase subunit PEN-2 (146 aa).

The disordered stretch occupies residues 1–26 (MEATRSDDPSLNPIRNRNPNPNPNPN). Residues 1 to 61 (MEATRSDDPS…SVDYARRFYK (61 aa)) are Lumenal-facing. The segment covering 9–19 (PSLNPIRNRNP) has biased composition (low complexity). A helical membrane pass occupies residues 62–82 (FGFALLPWLWFVNCFYFWPVL). Residues 83 to 98 (RHSRAFPQIRNYVVRS) lie on the Cytoplasmic side of the membrane. A helical membrane pass occupies residues 99–119 (AIGFSVFTALLSAWALTFSIG). Over 120-146 (GEQLFGPLYDKLVMYNVADRLGLSGLA) the chain is Lumenal.

This sequence belongs to the PEN-2 family. In terms of assembly, probable component of the gamma-secretase complex, a complex composed of a presenilin homodimer, nicastrin, APH1 and PEN2.

Its subcellular location is the membrane. Functionally, probable subunit of the gamma-secretase complex, an endoprotease complex that catalyzes the intramembrane cleavage of integral membrane proteins such as Notch receptors. The sequence is that of Probable gamma-secretase subunit PEN-2 from Arabidopsis thaliana (Mouse-ear cress).